The following is a 438-amino-acid chain: Transposon Ty2-C Gag polyprotein (438 aa).

3 stretches are compositionally biased toward polar residues: residues 1–11, 19–39, and 49–60; these read MESQQLHQNPR, ASVTSKEVPSNQDPLAVSASN, and KVNSQQETTPGT. Disordered stretches follow at residues 1-88, 365-397, and 419-438; these read MESQ…YQQH, NVSRTSPNTTNTKVTTRNYQRTNSSKPRAAKAH, and SSQYLSDDNELSLRPATERI. The tract at residues 295–397 is RNA-binding; the sequence is ENNINVSDRL…SSKPRAAKAH (103 aa). Residues 369–382 are compositionally biased toward low complexity; sequence TSPNTTNTKVTTRN.

In terms of assembly, homotrimer.

The protein resides in the cytoplasm. Its function is as follows. Capsid protein (CA) is the structural component of the virus-like particle (VLP), forming the shell that encapsulates the retrotransposons dimeric RNA genome. The particles are assembled from trimer-clustered units and there are holes in the capsid shells that allow for the diffusion of macromolecules. CA also has nucleocapsid-like chaperone activity, promoting primer tRNA(i)-Met annealing to the multipartite primer-binding site (PBS), dimerization of Ty2 RNA and initiation of reverse transcription. In Saccharomyces cerevisiae (strain ATCC 204508 / S288c) (Baker's yeast), this protein is Transposon Ty2-C Gag polyprotein (TY2A-C).